The sequence spans 229 residues: uncharacterized protein (229 aa).

7 consecutive transmembrane segments (helical) span residues 21–41 (IYSLVGMGVGLSAFVSYLMLY), 56–76 (MIYYGAAIIELILVFVASGAA), 83–103 (ALPIFLIYSALNGFTLSFIIV), 109–129 (TVFQAFLSSAAVFFAMSIIGV), 141–161 (AMFAALIGVVVASLINLFIGS), 162–182 (GMMSYVISVISVLIFSGLIAS), and 202–222 (WAVAMALSLYLDFINLFISLL).

This sequence belongs to the BI1 family.

The protein resides in the cell membrane. This is an uncharacterized protein from Streptococcus pyogenes serotype M6 (strain ATCC BAA-946 / MGAS10394).